Here is a 331-residue protein sequence, read N- to C-terminus: UPF0194 membrane protein CKO_02332 (331 aa).

The N-terminal stretch at 1 to 15 (MKKPVVIALAVAALA) is a signal peptide. Residues 142-207 (ISANDLENAR…ELDLQDTTLI (66 aa)) adopt a coiled-coil conformation.

The protein belongs to the UPF0194 family.

The protein resides in the periplasm. The protein is UPF0194 membrane protein CKO_02332 of Citrobacter koseri (strain ATCC BAA-895 / CDC 4225-83 / SGSC4696).